A 230-amino-acid polypeptide reads, in one-letter code: Cysteine S-methyltransferase OspZ (230 aa).

The segment at 49–52 (GITR) is interaction with host proteins TAB2, TAB3 and ZRANB3. Ala92, Ser98, Arg107, Gln111, Tyr204, and Glu208 together coordinate S-adenosyl-L-methionine.

It belongs to the NleE/OspZ family. As to quaternary structure, monomer.

Its subcellular location is the secreted. The protein resides in the host cytoplasm. It localises to the host nucleus. It catalyses the reaction L-cysteinyl-[protein] + S-adenosyl-L-methionine = S-methyl-L-cysteinyl-[protein] + S-adenosyl-L-homocysteine + H(+). Its function is as follows. Cysteine methyltransferase effector that inhibits host cell NF-kappa-B activation by preventing nuclear translocation of host protein RELA/p65. Acts by mediating cysteine methylation of host proteins TAB2 and TAB3: methylation of a conserved cysteine residue of the RanBP2-type zinc finger (NZF) of TAB2 and TAB3 disrupts zinc-binding, thereby inactivating the ubiquitin chain-binding activity of TAB2 and TAB3, leading to NF-kappa-B inactivation. Also mediates cysteine methylation of host protein ZRANB3, inactivating its ability to bind ubiquitin chains. The protein is Cysteine S-methyltransferase OspZ of Shigella boydii.